Reading from the N-terminus, the 284-residue chain is RNase adapter protein RapZ (284 aa).

ATP is bound at residue 8 to 15; sequence GRSGSGKS. 56-59 lines the GTP pocket; it reads DVRN. Residues 266 to 284 form an RNA-binding region; sequence RARGKNVQSRHRTLEKRKQ.

It belongs to the RapZ-like family. RapZ subfamily. As to quaternary structure, homotrimer.

Modulates the synthesis of GlmS, by affecting the processing and stability of the regulatory small RNA GlmZ. When glucosamine-6-phosphate (GlcN6P) concentrations are high in the cell, RapZ binds GlmZ and targets it to cleavage by RNase E. Consequently, GlmZ is inactivated and unable to activate GlmS synthesis. Under low GlcN6P concentrations, RapZ is sequestered and inactivated by an other regulatory small RNA, GlmY, preventing GlmZ degradation and leading to synthesis of GlmS. This is RNase adapter protein RapZ from Yersinia pseudotuberculosis serotype O:1b (strain IP 31758).